The following is a 167-amino-acid chain: Probable phospholipid hydroperoxide glutathione peroxidase (167 aa).

Residue Cys-41 is part of the active site.

This sequence belongs to the glutathione peroxidase family.

The protein localises to the cytoplasm. The enzyme catalyses a hydroperoxy polyunsaturated fatty acid + 2 glutathione = a hydroxy polyunsaturated fatty acid + glutathione disulfide + H2O. Its function is as follows. Protects cells and enzymes from oxidative damage, by catalyzing the reduction of hydrogen peroxide, lipid peroxides and organic hydroperoxide, by glutathione. This Citrus sinensis (Sweet orange) protein is Probable phospholipid hydroperoxide glutathione peroxidase (CSA).